Here is a 499-residue protein sequence, read N- to C-terminus: MASINRPIVFFTVCLFLLCNGSLAQQLLGQSTSQWQSSRRGSPRECRFDRLQAFEPIRSVRSQAGTTEFFDVSNEQFQCTGVSVVRRVIEPRGLLLPHYTNGASLVYIIQGRGITGPTFPGCPESYQQQFQQSGQAQLTESQSQSQKFKDEHQKIHRFRQGDVIALPAGVAHWCYNDGEVPVVAIYVTDLNNGANQLDPRQRDFLLAGNKRNPQAYRREVEERSQNIFSGFSTELLSEALGVSSQVARQLQCQNDQRGEIVRVEHGLSLLQPYASLQEQEQGQVQSRERYQEGQYQQSQYGSGCSNGLDETFCTLRVRQNIDNPNRADTYNPRAGRVTNLNTQNFPILSLVQMSAVKVNLYQNALLSPFWNINAHSVVYITQGRARVQVVNNNGKTVFNGELRRGQLLIIPQHYAVVKKAQREGCAYIAFKTNPNSMVSHIAGKSSIFRALPNDVLANAYRISREEAQRLKHNRGDEFGAFTPIQYKSYQDVYNAAESS.

Residues 1–24 (MASINRPIVFFTVCLFLLCNGSLA) form the signal peptide. 2 disulfides stabilise this stretch: Cys-46–Cys-79 and Cys-122–Cys-313. Cupin type-1 domains follow at residues 51–248 (LQAF…QVAR) and 319–468 (QNID…EEAQ).

The protein belongs to the 11S seed storage protein (globulins) family. In terms of assembly, hexamer; each subunit is composed of an acidic and a basic chain derived from a single precursor and linked by a disulfide bond.

Seed storage protein. The sequence is that of Glutelin type-A 1 (GLUA1) from Oryza sativa subsp. japonica (Rice).